We begin with the raw amino-acid sequence, 654 residues long: Biotin-dependent 3-methylcrotonyl-coenzyme A carboxylase alpha1 subunit (654 aa).

Residues M1–A448 form the Biotin carboxylation domain. The ATP-grasp domain maps to K120–A319. A148–I209 provides a ligand contact to ATP. 3 residues coordinate Mg(2+): E275, E290, and N292. The Mn(2+) site is built by E275, E290, and N292. The Biotinyl-binding domain maps to H578 to K653. N6-biotinyllysine is present on K620.

In terms of assembly, the biotin-dependent acyl-CoA carboxylase complex is composed of AccA1, which contains the biotin carboxylase (BC) and biotin carboxyl carrier protein (BCCP) domains, and AccD1, which contains the carboxyl transferase (CT) domain. The AccA1/AccD1 complex forms a dodecamer. Mg(2+) is required as a cofactor. The cofactor is Mn(2+). Biotin serves as cofactor.

It carries out the reaction N(6)-biotinyl-L-lysyl-[protein] + hydrogencarbonate + ATP = N(6)-carboxybiotinyl-L-lysyl-[protein] + ADP + phosphate + H(+). It functions in the pathway amino-acid degradation; L-leucine degradation. Functionally, component of a biotin-dependent acyl-CoA carboxylase complex. This subunit catalyzes the ATP-dependent carboxylation of the biotin carried by the biotin carboxyl carrier (BCC) domain, resulting in the formation of carboxyl biotin. When associated with the beta1 subunit AccD1, is involved in branched amino-acid catabolism with methylcrotonyl coenzyme A as the substrate. This Mycobacterium bovis (strain ATCC BAA-935 / AF2122/97) protein is Biotin-dependent 3-methylcrotonyl-coenzyme A carboxylase alpha1 subunit (accA1).